Here is an 83-residue protein sequence, read N- to C-terminus: Urotensin-2 (83 aa).

A propeptide spanning residues 49–71 (EVLLEKQSLLNPFSRVFGIRKQF) is cleaved from the precursor. Cysteine 77 and cysteine 82 are disulfide-bonded.

This sequence belongs to the urotensin-2 family.

Its subcellular location is the secreted. Functionally, urotensin is found in the teleost caudal neurosecretory system. It has a suggested role in osmoregulation and as a corticotropin-releasing factor. The non-hormonal portion of this precursor may be a urotensin binding protein, urophysin. The chain is Urotensin-2 from Platichthys flesus (European flounder).